We begin with the raw amino-acid sequence, 303 residues long: MTHWAFSPIQPGAARNMAAWQIAGKKDGPYQIDVSWPLTWSESGDASGKSANAVYLVDGNALFLTATETLRRRESHRPSETGTVVIAIGYPITDSVFSPRRSYDLTPPCDHYIPPEGPDGSPKPEAHGGADEFLTFIAEIVRPFVELKVFPRVSFGRTALFGHSYGGLFALHALFTKPSSFDVYLAASPSIWWNNRSILTEARRFISGAALFSSAHPVLRLSFGSREQYPVRQRVESDEMFKRRQRAAEQRRMNDNCEELYSELLASGRLCKLEVKEYLDEDHGSVIGPALSGGIMFLSNLSA.

It belongs to the esterase D family. As to quaternary structure, homodimer.

It catalyses the reaction enterobactin + 3 H2O = 3 N-(2,3-dihydroxybenzoyl)-L-serine + 2 H(+). Its function is as follows. Displays specific enterobactin (ENB) esterase activity required for intracellular release of iron. Enterobactin is a xenosiderophore that is selectively produced by Gram-negative Enterobacteriaceae. The affinity for enterobactin is quite high, potentially due to the low natural abundance of this xenosiderophore in fungal habitats. Does not hydrolyze triacetylfusarinine C (TAFC). The polypeptide is Siderophore enterobactin esterase (Emericella nidulans (strain FGSC A4 / ATCC 38163 / CBS 112.46 / NRRL 194 / M139) (Aspergillus nidulans)).